The primary structure comprises 269 residues: MVKAGELVEQQKAAMEEEANAEAAEDQEEPEDTACSSSSKKKKKVVPGIVYLGHVPPRFRPLHVRNLLSAYGEVGRVFFQAEDHFVKRKKKAAAAAGGKKGAKYSKDYTEGWVEFRDKRVAKRVAASLHNTPMGARKRSPFRYDLWNLKYLHRFTWSHLSEHLAFERQVRRQRLRAEVAQAKRETDFYLRNVEQGQHFLAADGDATRPNSSWTFTQRPTEQEFRARKAARPGGRERARLANVEDQARSNRGLLAKIFGAPLPAESKEKP.

The tract at residues 1–40 (MVKAGELVEQQKAAMEEEANAEAAEDQEEPEDTACSSSSK) is disordered. Residues 5-29 (GELVEQQKAAMEEEANAEAAEDQEE) adopt a coiled-coil conformation. The segment covering 16-32 (EEEANAEAAEDQEEPED) has biased composition (acidic residues). An RRM domain is found at 48-145 (GIVYLGHVPP…RKRSPFRYDL (98 aa)). Residues 164 to 194 (AFERQVRRQRLRAEVAQAKRETDFYLRNVEQ) are a coiled coil. The tract at residues 220 to 244 (EQEFRARKAARPGGRERARLANVED) is disordered.

The protein belongs to the ESF2/ABP1 family. Interacts with ESF1/ABTAP. Interacts with IGHMBP2. Ubiquitously expressed.

It is found in the nucleus. It localises to the nucleolus. In terms of biological role, could be a novel TATA-binding protein (TBP) which can function as a basal transcription activator. Can act as a regulator of basal transcription for class II genes. In Mus musculus (Mouse), this protein is Activator of basal transcription 1 (Abt1).